The chain runs to 852 residues: Disks large homolog 2 (852 aa).

Residues Cys-5 and Cys-7 are each lipidated (S-palmitoyl cysteine). Phosphoserine is present on Ser-28. Residue Tyr-58 is modified to Phosphotyrosine. Position 65 is a phosphoserine (Ser-65). PDZ domains lie at 98–185 (EITL…RRRR) and 193–280 (EIKL…GKPT). Residues Ser-307, Ser-328, Ser-360, Ser-365, Ser-406, and Ser-414 each carry the phosphoserine modification. The PDZ 3 domain maps to 421–502 (KVVLHKGSTG…TVTIIAQYQP (82 aa)). Tyr-505 is subject to Phosphotyrosine. A phosphoserine mark is found at Ser-528, Ser-530, and Ser-553. The SH3 domain maps to 536 to 606 (KRSLYVRAMF…PSKRRVERKE (71 aa)). The Guanylate kinase-like domain maps to 662 to 837 (TRPVIILGPM…IYNQCKLVIE (176 aa)). Residues Tyr-732 and Tyr-737 each carry the phosphotyrosine modification.

In terms of assembly, interacts with NOS1/nNOS through second PDZ domain. Interacts with KCNJ2/Kir2.1 (via C-terminus) through one of its PDZ domains. Interacts with KCNJ4. Interacts with FRMPD4 (via C-terminus). Interacts through its PDZ domains with NETO1. Interacts with LRFN1, LRFN2 and LRFN4. Interacts with FASLG. Interacts with KCNJ4. Interacts with ADAM22. Interacts with DGKI (via PDZ-binding motif). Palmitoylation of isoform 1 and isoform 2 is not required for targeting to postsynaptic density. In terms of tissue distribution, brain. Highest levels of isoform 1 in cortex, olfactory bulb, thalamus, hypothalamus, striatum and hippocampus. Highest level of isoform 2 in olfactory bulb. Reduced levels in cortex and hippocampus. Highest level of isoform 4 in spinal cord. Low levels of isoform 4, isoform 6, and isoform 7 in superior cervical ganglion.

The protein localises to the cell membrane. The protein resides in the postsynaptic density. It is found in the synapse. It localises to the membrane. Its subcellular location is the cell projection. The protein localises to the axon. The protein resides in the perikaryon. Required for perception of chronic pain through NMDA receptor signaling. Regulates surface expression of NMDA receptors in dorsal horn neurons of the spinal cord. Interacts with the cytoplasmic tail of NMDA receptor subunits as well as inward rectifying potassium channels. Involved in regulation of synaptic stability at cholinergic synapses. Part of the postsynaptic protein scaffold of excitatory synapses. This Mus musculus (Mouse) protein is Disks large homolog 2 (Dlg2).